A 276-amino-acid chain; its full sequence is MAD2L1-binding protein (276 aa).

Residues 1-10 (MAASGEEDMS) are compositionally biased toward acidic residues. The segment at 1–30 (MAASGEEDMSELSPAAAPNLDWYEKPEETH) is disordered. Residues 49–81 (PAEPFCPRDLVPVVFPGPVSQEDCCQFTCELLK) are interaction with MAD2L1.

Belongs to the MAD2L1BP family. Interacts with MAD2L1.

The protein resides in the nucleus. It localises to the nucleoplasm. Its subcellular location is the cytoplasm. It is found in the cytoskeleton. The protein localises to the spindle. May function to silence the spindle checkpoint and allow mitosis to proceed through anaphase by binding MAD2L1 after it has become dissociated from the MAD2L1-CDC20 complex. This Mus musculus (Mouse) protein is MAD2L1-binding protein (Mad2l1bp).